The following is a 236-amino-acid chain: Large ribosomal subunit protein uL1 (236 aa).

Belongs to the universal ribosomal protein uL1 family. Part of the 50S ribosomal subunit.

Binds directly to 23S rRNA. The L1 stalk is quite mobile in the ribosome, and is involved in E site tRNA release. Functionally, protein L1 is also a translational repressor protein, it controls the translation of the L11 operon by binding to its mRNA. The polypeptide is Large ribosomal subunit protein uL1 (Corynebacterium efficiens (strain DSM 44549 / YS-314 / AJ 12310 / JCM 11189 / NBRC 100395)).